Here is a 340-residue protein sequence, read N- to C-terminus: MQYKNQNLTHFVKAAGUAAKLSPGGLKTILNFMQKTPALLSDIGNNEDASVYQISPDLALVQTLDFITPIVDSAYHFGAIAAANALSDVFAMGAEVINALNIVGFDTCNHDLNILKELLEGANDKVKECNALVVGGHTIESTELFFGLSVTGKVHPSKFIANNTSKIGDCIILTKPLGTGILSTALKAQMLNQKHLDIMLKNMIELNYKASQIALKFHPSAMSDVTGFGLLGHLKEMLNKNISFEIFESELPFLDGVKEYFNMGLIPAGAYKNLEFIKELTPDLNEEKLLLCDPQTSGGLLISISEKDSLECLKKLEDENIQAKIIAKVVNKQENDIIIS.

U17 is an active-site residue. U17 is a non-standard amino acid (selenocysteine). ATP is bound by residues K20 and 45–47 (NNE). D48 provides a ligand contact to Mg(2+). Residues D65, D88, and 136-138 (GHT) each bind ATP. D88 contributes to the Mg(2+) binding site. Residue D224 coordinates Mg(2+).

This sequence belongs to the selenophosphate synthase 1 family. Class I subfamily. In terms of assembly, homodimer. Mg(2+) serves as cofactor.

It carries out the reaction hydrogenselenide + ATP + H2O = selenophosphate + AMP + phosphate + 2 H(+). In terms of biological role, synthesizes selenophosphate from selenide and ATP. The sequence is that of Selenide, water dikinase from Campylobacter jejuni subsp. jejuni serotype O:2 (strain ATCC 700819 / NCTC 11168).